We begin with the raw amino-acid sequence, 209 residues long: Na(+)-translocating NADH-quinone reductase subunit D (209 aa).

5 consecutive transmembrane segments (helical) span residues 42-62 (LVMT…ISLI), 66-86 (IPGS…VIVV), 103-123 (VFVG…AYAM), 131-151 (FMDG…VGFL), and 178-198 (NGLF…IWGL).

It belongs to the NqrDE/RnfAE family. In terms of assembly, composed of six subunits; NqrA, NqrB, NqrC, NqrD, NqrE and NqrF.

It localises to the cell inner membrane. It catalyses the reaction a ubiquinone + n Na(+)(in) + NADH + H(+) = a ubiquinol + n Na(+)(out) + NAD(+). Functionally, NQR complex catalyzes the reduction of ubiquinone-1 to ubiquinol by two successive reactions, coupled with the transport of Na(+) ions from the cytoplasm to the periplasm. NqrA to NqrE are probably involved in the second step, the conversion of ubisemiquinone to ubiquinol. This Proteus mirabilis (strain HI4320) protein is Na(+)-translocating NADH-quinone reductase subunit D.